A 698-amino-acid chain; its full sequence is Cytochrome c oxidase subunit 1 (698 aa).

The chain crosses the membrane as a helical span at residues 65–85 (INYLYFSMVTGLSGAALATMI). E88 contributes to the Ca(2+) binding site. H111 is a Fe(II)-heme a binding site. A run of 8 helical transmembrane segments spans residues 113–133 (LIMV…NFLI), 147–167 (LNSI…KIGF), 304–324 (ILIL…TNLL), 349–369 (IFLT…AVIM), 395–415 (LFWF…FGFI), 434–454 (IWAI…HMYL), 468–488 (ITIM…LSLV), and 498–518 (FLFS…GMWL). H401 is a binding site for Cu cation. A cross-link (1'-histidyl-3'-tyrosine (His-Tyr)) is located at residues 401–405 (HPEVY). Y405 lines the O2 pocket. The Cu cation site is built by H450 and H451. Residues H528 and D529 each contribute to the Mg(2+) site. 3 helical membrane passes run 533–553 (VVAH…FSGF), 574–594 (LIYY…LGFS), and 613–633 (MSTA…LMIF). H536 is a binding site for heme a3. H538 serves as a coordination point for Fe(II)-heme a.

Belongs to the heme-copper respiratory oxidase family. In terms of assembly, component of the cytochrome c oxidase (complex IV, CIV), a multisubunit enzyme composed of a catalytic core of 3 subunits and several supernumerary subunits. The complex exists as a monomer or a dimer and forms supercomplexes (SCs) in the inner mitochondrial membrane with ubiquinol-cytochrome c oxidoreductase (cytochrome b-c1 complex, complex III, CIII). Heme is required as a cofactor. Requires Cu cation as cofactor.

The protein resides in the mitochondrion inner membrane. The enzyme catalyses 4 Fe(II)-[cytochrome c] + O2 + 8 H(+)(in) = 4 Fe(III)-[cytochrome c] + 2 H2O + 4 H(+)(out). Its pathway is energy metabolism; oxidative phosphorylation. Component of the cytochrome c oxidase, the last enzyme in the mitochondrial electron transport chain which drives oxidative phosphorylation. The respiratory chain contains 3 multisubunit complexes succinate dehydrogenase (complex II, CII), ubiquinol-cytochrome c oxidoreductase (cytochrome b-c1 complex, complex III, CIII) and cytochrome c oxidase (complex IV, CIV), that cooperate to transfer electrons derived from NADH and succinate to molecular oxygen, creating an electrochemical gradient over the inner membrane that drives transmembrane transport and the ATP synthase. Cytochrome c oxidase is the component of the respiratory chain that catalyzes the reduction of oxygen to water. Electrons originating from reduced cytochrome c in the intermembrane space (IMS) are transferred via the dinuclear copper A center (CU(A)) of subunit 2 and heme A of subunit 1 to the active site in subunit 1, a binuclear center (BNC) formed by heme A3 and copper B (CU(B)). The BNC reduces molecular oxygen to 2 water molecules using 4 electrons from cytochrome c in the IMS and 4 protons from the mitochondrial matrix. The sequence is that of Cytochrome c oxidase subunit 1 (COI) from Tetrahymena pyriformis.